A 141-amino-acid polypeptide reads, in one-letter code: Mu-like prophage FluMu protein gp36 (141 aa).

To phage Mu protein gp36.

The protein is Mu-like prophage FluMu protein gp36 of Haemophilus influenzae (strain ATCC 51907 / DSM 11121 / KW20 / Rd).